A 198-amino-acid polypeptide reads, in one-letter code: Small ribosomal subunit protein eS1 (198 aa).

This sequence belongs to the eukaryotic ribosomal protein eS1 family.

The chain is Small ribosomal subunit protein eS1 from Nanoarchaeum equitans (strain Kin4-M).